A 485-amino-acid chain; its full sequence is MSLFDHSVSELHKKLNNKEISVTDLVEESYKRIADVEDNVKAFLTLDEENARAKAKELDAKIGAEDNGLLFGMPIGVKDNIVTNGLRTTCASKILANFDPIYDATVVQKLKAADTITIGKLNMDEFAMGSSNENSGFYATKNPWNLDYVPGGSSGGSAAAVAAGEVLFSLGSDTGGSIRQPAAYCGVVGLKPTYGRVSRYGLVAFASSLDQIGPITRTVEDNAYLLQAISGLDRMDATSANVEVGNYLAGLTGDVKGLRIAVPKEYLGEGVGEEARESVLAALKVLEGMGATWEEVSLPHSKYALATYYLLSSSEASANLSRFDGVRYGVRSDNVNNLLDLYKNTRSEGFGDEVKRRIMLGTFALSSGYYDAYYKKAQQVRTLIKNDFENVFANYDVIIGPTTPTPAFKVGEKVDDPMTMYANDILTIPVNLAGVPAISVPCGFGANNMPLGLQIIGKHFDEATIYRVAHAFEQATDYHTKKASL.

Catalysis depends on charge relay system residues Lys-78 and Ser-153. The Acyl-ester intermediate role is filled by Ser-177.

It belongs to the amidase family. GatA subfamily. In terms of assembly, heterotrimer of A, B and C subunits.

It carries out the reaction L-glutamyl-tRNA(Gln) + L-glutamine + ATP + H2O = L-glutaminyl-tRNA(Gln) + L-glutamate + ADP + phosphate + H(+). In terms of biological role, allows the formation of correctly charged Gln-tRNA(Gln) through the transamidation of misacylated Glu-tRNA(Gln) in organisms which lack glutaminyl-tRNA synthetase. The reaction takes place in the presence of glutamine and ATP through an activated gamma-phospho-Glu-tRNA(Gln). The sequence is that of Glutamyl-tRNA(Gln) amidotransferase subunit A from Bacillus cereus (strain 03BB102).